A 278-amino-acid polypeptide reads, in one-letter code: Replication protein A 32 kDa subunit B (278 aa).

Positions 70–143 form a DNA-binding region, OB; sequence VVIVGRISRM…RSVNVFSVRP (74 aa).

Belongs to the replication factor A protein 2 family. In terms of assembly, heterotrimer of RPA1, RPA2 and RPA3 (canonical replication protein A complex). Phosphorylated in a cell-cycle-dependent manner (from the S phase until mitosis). In response to DNA damage, recruited to DNA-repair nuclear foci, as a hypophosphorylated form.

The protein resides in the nucleus. Component of the replication protein A complex (RPA) required for DNA recombination, repair and replication. The activity of RPA is mediated by single-stranded DNA binding and protein interactions. Required fo cell division in meristems. Involved in the maintenance of transcriptional epigenetic gene silencing (TGS) at specific loci (including some transposons) by regulating histone H3 acetylation, 'Lys-4' and 'Lys-9' methylation. This Arabidopsis thaliana (Mouse-ear cress) protein is Replication protein A 32 kDa subunit B (RPA2B).